The sequence spans 68 residues: ATP synthase F(0) complex subunit 8 (68 aa).

Residues 8–21 form a helical membrane-spanning segment; sequence VWPTMITPMLLTLF. Lysine 54 is subject to N6-acetyllysine; alternate. The residue at position 54 (lysine 54) is an N6-succinyllysine; alternate. Lysine 57 is modified (N6-acetyllysine).

The protein belongs to the ATPase protein 8 family. Component of the ATP synthase complex composed at least of ATP5F1A/subunit alpha, ATP5F1B/subunit beta, ATP5MC1/subunit c (homooctomer), MT-ATP6/subunit a, MT-ATP8/subunit 8, ATP5ME/subunit e, ATP5MF/subunit f, ATP5MG/subunit g, ATP5MK/subunit k, ATP5MJ/subunit j, ATP5F1C/subunit gamma, ATP5F1D/subunit delta, ATP5F1E/subunit epsilon, ATP5PF/subunit F6, ATP5PB/subunit b, ATP5PD/subunit d, ATP5PO/subunit OSCP. ATP synthase complex consists of a soluble F(1) head domain (subunits alpha(3) and beta(3)) - the catalytic core - and a membrane F(0) domain - the membrane proton channel (subunits c, a, 8, e, f, g, k and j). These two domains are linked by a central stalk (subunits gamma, delta, and epsilon) rotating inside the F1 region and a stationary peripheral stalk (subunits F6, b, d, and OSCP). Interacts with PRICKLE3.

It localises to the mitochondrion membrane. Its function is as follows. Subunit 8, of the mitochondrial membrane ATP synthase complex (F(1)F(0) ATP synthase or Complex V) that produces ATP from ADP in the presence of a proton gradient across the membrane which is generated by electron transport complexes of the respiratory chain. ATP synthase complex consist of a soluble F(1) head domain - the catalytic core - and a membrane F(1) domain - the membrane proton channel. These two domains are linked by a central stalk rotating inside the F(1) region and a stationary peripheral stalk. During catalysis, ATP synthesis in the catalytic domain of F(1) is coupled via a rotary mechanism of the central stalk subunits to proton translocation. In vivo, can only synthesize ATP although its ATP hydrolase activity can be activated artificially in vitro. Part of the complex F(0) domain. The polypeptide is ATP synthase F(0) complex subunit 8 (Homo sapiens (Human)).